We begin with the raw amino-acid sequence, 766 residues long: Protein translocase subunit SecA 2 (766 aa).

Residues glutamine 84, glycine 102–threonine 106, and aspartate 490 each bind ATP.

The protein belongs to the SecA family. As to quaternary structure, monomer and homodimer. Part of the essential Sec protein translocation apparatus which comprises SecA, SecYEG and auxiliary proteins SecDF. Other proteins may also be involved.

Its subcellular location is the cell membrane. The protein resides in the cytoplasm. The catalysed reaction is ATP + H2O + cellular proteinSide 1 = ADP + phosphate + cellular proteinSide 2.. In terms of biological role, part of the Sec protein translocase complex. Interacts with the SecYEG preprotein conducting channel. Has a central role in coupling the hydrolysis of ATP to the transfer of proteins into and across the cell membrane, serving as an ATP-driven molecular motor driving the stepwise translocation of polypeptide chains across the membrane. The polypeptide is Protein translocase subunit SecA 2 (Thermobifida fusca (strain YX)).